Here is a 106-residue protein sequence, read N- to C-terminus: MRLMIREFFQKYFIDPIKYNTGYNPVNTLVYAIILGIATLLVYKVLKRLKIEINNAFFRALIPYMIFGAFTRALTDAGVFRELISLFPWDILPGLCNSIFCPFSLT.

This is an uncharacterized protein from Pyrococcus woesei.